We begin with the raw amino-acid sequence, 264 residues long: MQSSKPIESHGQPIAGGKLPLICVPLVGHTLDEVMAELAIVLPKKPDVLEWRVDFFESIGDVAAVIAAAKAIKSKAGDIPLLFTRRSVMEGGEKIALNEDQVIALYGAVCESKAIDLIDYEMANETANIAQVRAAAKSNDIKLVLSFHNFSSTPGLEALASKFLMADQLGADIAKVAVMPRDPNDVLILLAATQQASQKLRIPLISMSMGPYGSLTRLFGWAFGSALTFAVGARSSAPGQVPIEDLNTVLGILRKAMGDGQTTP.

3-dehydroquinate is bound by residues 50–52 (EWR) and arginine 86. Histidine 148 functions as the Proton donor/acceptor in the catalytic mechanism. Lysine 175 functions as the Schiff-base intermediate with substrate in the catalytic mechanism. 3-dehydroquinate-binding residues include arginine 217, serine 236, and glutamine 240.

It belongs to the type-I 3-dehydroquinase family. In terms of assembly, homodimer.

The catalysed reaction is 3-dehydroquinate = 3-dehydroshikimate + H2O. Its pathway is metabolic intermediate biosynthesis; chorismate biosynthesis; chorismate from D-erythrose 4-phosphate and phosphoenolpyruvate: step 3/7. Functionally, involved in the third step of the chorismate pathway, which leads to the biosynthesis of aromatic amino acids. Catalyzes the cis-dehydration of 3-dehydroquinate (DHQ) and introduces the first double bond of the aromatic ring to yield 3-dehydroshikimate. In Albidiferax ferrireducens (strain ATCC BAA-621 / DSM 15236 / T118) (Rhodoferax ferrireducens), this protein is 3-dehydroquinate dehydratase.